Consider the following 149-residue polypeptide: Arginine repressor (149 aa).

Belongs to the ArgR family.

Its subcellular location is the cytoplasm. It participates in amino-acid biosynthesis; L-arginine biosynthesis [regulation]. Functionally, regulates arginine biosynthesis genes. The protein is Arginine repressor of Alkaliphilus oremlandii (strain OhILAs) (Clostridium oremlandii (strain OhILAs)).